A 444-amino-acid polypeptide reads, in one-letter code: Protein EVI2B (444 aa).

A signal peptide spans 1-23 (MEFKYLVFIVLCQYLDNTFFSET). The Extracellular portion of the chain corresponds to 24-203 (EAITTEQQSL…GTAHKNNHNA (180 aa)). Asn63, Asn94, Asn104, and Asn127 each carry an N-linked (GlcNAc...) asparagine glycan. Polar residues-rich tracts occupy residues 104-131 (NNSL…STGQ) and 160-171 (THNQPTKSTPTI). Residues 104–197 (NNSLPQTSPS…EPPSGKGTAH (94 aa)) are disordered. Positions 177-187 (TPPPPPPPLTS) are enriched in pro residues. Residues 204–224 (IAAILIGTIIISMLVAILMII) form a helical membrane-spanning segment. At 225 to 444 (LWKYLRKPVL…SLPPPPTELL (220 aa)) the chain is on the cytoplasmic side. Thr250 carries the post-translational modification Phosphothreonine. Phosphoserine is present on residues Ser269, Ser272, Ser279, and Ser295. Composition is skewed to polar residues over residues 318–332 (SEDS…TAVS) and 361–370 (SPLPNDSINP). 2 disordered regions span residues 318–337 (SEDS…DDAD) and 361–444 (SPLP…TELL).

In terms of tissue distribution, expressed in myeloid and lymphoid progenitors and increased in mature hematopoietic populations with the highest levels in granulocytes.

It is found in the membrane. Its function is as follows. Required for granulocyte differentiation and functionality of hematopoietic progenitor cells through the control of cell cycle progression and survival of hematopoietic progenitor cells. This is Protein EVI2B from Mus musculus (Mouse).